We begin with the raw amino-acid sequence, 179 residues long: MSKATKRKHVVKEVLGDYVQPTEHQRIVKVLGSPGNNLHEVETSEGERFLASMPTKFRKNIWIKRGDFLIVDPIAEGEKVKAEIAFILYKDHQRLLQKEGLWPEGFTQDKTGVVTKENENNGIQSTEALSTAQAKEQGEDSETDDDSGLFVNTNRVHYEDSEEESESEEESESEEDEEN.

In terms of domain architecture, S1-like spans 14 to 89; that stretch reads VLGDYVQPTE…VKAEIAFILY (76 aa). A disordered region spans residues 117–179; it reads ENENNGIQST…ESESEEDEEN (63 aa). Positions 120–134 are enriched in polar residues; the sequence is NNGIQSTEALSTAQA. The segment covering 160 to 179 has biased composition (acidic residues); that stretch reads DSEEESESEEESESEEDEEN.

This sequence belongs to the EIF1AD family.

The protein resides in the nucleus. Functionally, may play a role into cellular response to oxidative stress. May decrease cell proliferation. The sequence is that of Probable RNA-binding protein EIF1AD (eif1ad) from Xenopus tropicalis (Western clawed frog).